The chain runs to 455 residues: 23S rRNA (uracil(1939)-C(5))-methyltransferase RlmD (455 aa).

A TRAM domain is found at 12–70; that stretch reads SKQLSAKLSLSVTQLDHLGAGIAQHQGKIVFIPGVLPGETATVQFVEQKKSYAKAKLIS. [4Fe-4S] cluster contacts are provided by C83, C89, C92, and C174. Positions 288, 317, 322, 338, 365, and 385 each coordinate S-adenosyl-L-methionine. C411 acts as the Nucleophile in catalysis.

The protein belongs to the class I-like SAM-binding methyltransferase superfamily. RNA M5U methyltransferase family. RlmD subfamily.

It carries out the reaction uridine(1939) in 23S rRNA + S-adenosyl-L-methionine = 5-methyluridine(1939) in 23S rRNA + S-adenosyl-L-homocysteine + H(+). Its function is as follows. Catalyzes the formation of 5-methyl-uridine at position 1939 (m5U1939) in 23S rRNA. The polypeptide is 23S rRNA (uracil(1939)-C(5))-methyltransferase RlmD (Shewanella frigidimarina (strain NCIMB 400)).